The primary structure comprises 199 residues: B3 domain-containing protein Os06g0107800 (199 aa).

The tract at residues 13-32 (QLQGGGGGHGGGGGGGGGER) is disordered. The segment covering 15–29 (QGGGGGHGGGGGGGG) has biased composition (gly residues). A DNA-binding region (TF-B3) is located at residues 37–141 (FEKVVTPSDV…RLFIDCRKRA (105 aa)).

It localises to the nucleus. In Oryza sativa subsp. japonica (Rice), this protein is B3 domain-containing protein Os06g0107800.